A 780-amino-acid chain; its full sequence is ATP-dependent DNA helicase RecG (780 aa).

Domain regions lie at residues 1 to 350, 351 to 549, and 550 to 780; these read MLCS…GGIP, KKIE…EMPP, and GRKE…IEVG. Positions 154 to 252 are wedge domain; it reads RKIFKLNDLL…VTPKEGEYVR (99 aa). Residues Phe367, Leu369, Gly399, Ser400, Gly401, Lys402, Thr403, and Arg436 each contribute to the ATP site. The region spanning 383–544 is the Helicase ATP-binding domain; the sequence is DMISEKPMNR…FYGDLDVTVI (162 aa). The DEAH box motif lies at 497–500; that stretch reads DEQH. The 166-residue stretch at 563 to 728 folds into the Helicase C-terminal domain; it reads RVNEVYEFVR…EYDLKTRGPG (166 aa).

This sequence belongs to the helicase family. RecG subfamily. As to quaternary structure, monomer.

The enzyme catalyses Couples ATP hydrolysis with the unwinding of duplex DNA by translocating in the 3'-5' direction.. The catalysed reaction is ATP + H2O = ADP + phosphate + H(+). Its function is as follows. Plays a critical role in recombination and DNA repair. Helps process Holliday junction intermediates to mature products by catalyzing branch migration. Has replication fork (Y-DNA) regression activity, unwinds stalled or blocked replication forks to make a HJ that can be resolved. Has a DNA unwinding activity characteristic of a DNA helicase with 3'-5' polarity. Might be a DNA translocase rather than a bona fide helicase. This Thermotoga maritima (strain ATCC 43589 / DSM 3109 / JCM 10099 / NBRC 100826 / MSB8) protein is ATP-dependent DNA helicase RecG.